The following is a 140-amino-acid chain: 3-hydroxyacyl-[acyl-carrier-protein] dehydratase FabZ (140 aa).

The active site involves H47.

This sequence belongs to the thioester dehydratase family. FabZ subfamily.

It localises to the cytoplasm. It catalyses the reaction a (3R)-hydroxyacyl-[ACP] = a (2E)-enoyl-[ACP] + H2O. Involved in unsaturated fatty acids biosynthesis. Catalyzes the dehydration of short chain beta-hydroxyacyl-ACPs and long chain saturated and unsaturated beta-hydroxyacyl-ACPs. The chain is 3-hydroxyacyl-[acyl-carrier-protein] dehydratase FabZ from Streptococcus gordonii (strain Challis / ATCC 35105 / BCRC 15272 / CH1 / DL1 / V288).